Consider the following 668-residue polypeptide: ATP-dependent RNA helicase MSS116, mitochondrial (668 aa).

The transit peptide at 1-38 (MLKQLSRSLGIRSSPIVANLIRSKQVCTRGFHISLVKQ) directs the protein to the mitochondrion. The Q motif motif lies at 87 to 115 (DFKGKGYIHDSIINSLHKNDFKELTPIQQ). A Helicase ATP-binding domain is found at 119–300 (VPIFNTEKGL…KKHIHPEYEF (182 aa)). An ATP-binding site is contributed by 132–139 (AKTGTGKT). Residues 242–245 (DEAD) carry the DEAD box motif. Residues 332–501 (SLSELHGIMK…NIIDQIESPL (170 aa)) enclose the Helicase C-terminal domain. The segment at 585 to 668 (YSDFSRSGMS…EHRRIRDHDE (84 aa)) is disordered. Residues 586 to 597 (SDFSRSGMSQRP) are compositionally biased toward polar residues. Low complexity predominate over residues 609–636 (NGRGKYGNNRNNDWSYQNKNRYNNNNNR). Over residues 637 to 668 (QTERSYDSDRKSHNDWKYEKKFEHRRIRDHDE) the composition is skewed to basic and acidic residues.

Belongs to the DEAD box helicase family. DDX18/HAS1 subfamily.

It localises to the mitochondrion matrix. The catalysed reaction is ATP + H2O = ADP + phosphate + H(+). In terms of biological role, ATP-dependent RNA helicase required for mitochondrial splicing of group I and II introns. Also required for efficient mitochondrial translation. This chain is ATP-dependent RNA helicase MSS116, mitochondrial (MSS116), found in Candida albicans (strain SC5314 / ATCC MYA-2876) (Yeast).